The following is a 164-amino-acid chain: Transcriptional repressor NrdR (164 aa).

The segment at 3–34 (CPFCRHEDSRVVDSRSLDDGSAIRRRRQCQAC) is a zinc-finger region. Residues 46 to 136 (LTVVKRSGVA…VYRDFESLDD (91 aa)) form the ATP-cone domain.

The protein belongs to the NrdR family. Zn(2+) serves as cofactor.

Functionally, negatively regulates transcription of bacterial ribonucleotide reductase nrd genes and operons by binding to NrdR-boxes. The sequence is that of Transcriptional repressor NrdR from Micrococcus luteus (strain ATCC 4698 / DSM 20030 / JCM 1464 / CCM 169 / CCUG 5858 / IAM 1056 / NBRC 3333 / NCIMB 9278 / NCTC 2665 / VKM Ac-2230) (Micrococcus lysodeikticus).